A 441-amino-acid polypeptide reads, in one-letter code: uncharacterized protein (441 aa).

Residues 121–143 (TLSPSIVSEQQQQQQQQQQQQQQ) show a composition bias toward low complexity. 2 disordered regions span residues 121 to 146 (TLSP…QAIS) and 371 to 392 (SDAD…TAPN). The segment covering 382–391 (PTSAPSTTAP) has biased composition (polar residues).

This is an uncharacterized protein from Dictyostelium discoideum (Social amoeba).